The chain runs to 30 residues: Conotoxin Bt12.1 (30 aa).

In terms of processing, contains 3 disulfide bonds. Expressed by the venom duct.

Its subcellular location is the secreted. In Conus betulinus (Beech cone), this protein is Conotoxin Bt12.1.